A 308-amino-acid polypeptide reads, in one-letter code: N-acetylmuramic acid 6-phosphate etherase (308 aa).

Residues 62–225 enclose the SIS domain; it reads TAARLRQGGR…STGVMVQLGK (164 aa). The Proton donor role is filled by Glu-90. Glu-121 is a catalytic residue.

Belongs to the GCKR-like family. MurNAc-6-P etherase subfamily. As to quaternary structure, homodimer.

The enzyme catalyses N-acetyl-D-muramate 6-phosphate + H2O = N-acetyl-D-glucosamine 6-phosphate + (R)-lactate. Its pathway is amino-sugar metabolism; N-acetylmuramate degradation. In terms of biological role, specifically catalyzes the cleavage of the D-lactyl ether substituent of MurNAc 6-phosphate, producing GlcNAc 6-phosphate and D-lactate. The chain is N-acetylmuramic acid 6-phosphate etherase from Thermosynechococcus vestitus (strain NIES-2133 / IAM M-273 / BP-1).